We begin with the raw amino-acid sequence, 375 residues long: MSKAFGLLRQTCQSILAESPQSPADLEEKKEEDSNMKREQPRERPRAWDYPHGLVGLHNIGQTCCLNSLIQVFVMNVDFARILKRITVPRGADEQRRSVPFQMLLLLEKMQDSRQKAVRPLELAYCLQKYNVPLFVQHDAAQLYLKLWNLMKDQITDVHLVERLQALYMIRMKDSLICLDCAMESSRNSSMLTLPLSLFDVDSKPLKTLVGQEDALHCFFQPRELSRKSKCFCENCGKKTHRKQVLKLTHFPQTLTIHLMRFSIRNSQTRKICHSLYFPQSLDFSQVLPTKQKSCDAEEQPGGQFELFAVIAHVGMADSGHYCVYIRNAVDGKWFCFNDSNICLVSWEDIQCTYGNPNYHWQETAYLLVYMKMEC.

The disordered stretch occupies residues Glu-18–Pro-45. Residues Leu-26 to Pro-45 are compositionally biased toward basic and acidic residues. In terms of domain architecture, USP spans Val-55–Met-373. The Nucleophile role is filled by Cys-64. The active-site Proton acceptor is the His-321.

This sequence belongs to the peptidase C19 family. Interacts with STAT2; the interaction is direct. Interacts with IFNAR2; indirectly via STAT2, it negatively regulates the assembly of the ternary interferon-IFNAR1-IFNAR2 complex and inhibits type I interferon signaling. Interacts with STING1. Interacts with USP20.

The catalysed reaction is Thiol-dependent hydrolysis of ester, thioester, amide, peptide and isopeptide bonds formed by the C-terminal Gly of ubiquitin (a 76-residue protein attached to proteins as an intracellular targeting signal).. Functionally, interferon-induced ISG15-specific protease that plays a crucial role for maintaining a proper balance of ISG15-conjugated proteins in cells. Regulates protein ISGylation by efficiently cleaving ISG15 conjugates linked via isopeptide bonds. Regulates T-cell activation and T-helper 17 (Th17) cell differentiation by deubiquitinating TAK1, likely to keep TAK1-TAB complexes in steady conditions. In turn, restricts activation of NF-kappa-B, NFAT, and JNK as well as expression of IL2 in T-cells after TCR activation. Acts as a molecular adapter with USP20 to promote innate antiviral response through deubiquitinating STING1. Involved also in the negative regulation of the inflammatory response triggered by type I interferon. Upon recruitment by STAT2 to the type I interferon receptor subunit IFNAR2 interferes with the assembly of the ternary interferon-IFNAR1-IFNAR2 complex and acts as a negative regulator of the type I interferon signaling pathway. This Pongo abelii (Sumatran orangutan) protein is Ubl carboxyl-terminal hydrolase 18 (USP18).